A 384-amino-acid chain; its full sequence is Transcription factor iacI (384 aa).

It is found in the nucleus. Its function is as follows. Transcription factor; part of the gene cluster that mediates the biosynthesis of iso-A82775C, a enylepoxycyclohexane and biosynthetic precursor of the chloropestolide anticancer natural products. In Pestalotiopsis fici (strain W106-1 / CGMCC3.15140), this protein is Transcription factor iacI.